A 295-amino-acid polypeptide reads, in one-letter code: 4-diphosphocytidyl-2-C-methyl-D-erythritol kinase (295 aa).

Lys22 is an active-site residue. 106–116 (PAGGGFGGGSS) is a binding site for ATP. Asp148 is an active-site residue.

Belongs to the GHMP kinase family. IspE subfamily.

It catalyses the reaction 4-CDP-2-C-methyl-D-erythritol + ATP = 4-CDP-2-C-methyl-D-erythritol 2-phosphate + ADP + H(+). It functions in the pathway isoprenoid biosynthesis; isopentenyl diphosphate biosynthesis via DXP pathway; isopentenyl diphosphate from 1-deoxy-D-xylulose 5-phosphate: step 3/6. In terms of biological role, catalyzes the phosphorylation of the position 2 hydroxy group of 4-diphosphocytidyl-2C-methyl-D-erythritol. The protein is 4-diphosphocytidyl-2-C-methyl-D-erythritol kinase of Xanthomonas campestris pv. campestris (strain 8004).